Reading from the N-terminus, the 543-residue chain is Putative pectinesterase/pectinesterase inhibitor 22 (543 aa).

The first 19 residues, 1 to 19 (MGITTALLLVMLMSVHTSS), serve as a signal peptide directing secretion. Positions 38 to 197 (AKACQFIDAH…TQLVSNVLDM (160 aa)) are pectinesterase inhibitor 22. N-linked (GlcNAc...) asparagine glycans are attached at residues Asn211 and Asn263. The tract at residues 240-527 (NTVVAIDGKG…FTVGSFIDGR (288 aa)) is pectinesterase 22. Substrate contacts are provided by Thr315 and Gln345. Catalysis depends on Asp368, which acts as the Proton donor; for pectinesterase activity. An intrachain disulfide couples Cys382 to Cys402. Asp389 (nucleophile; for pectinesterase activity) is an active-site residue. The substrate site is built by Arg448 and Trp450.

This sequence in the N-terminal section; belongs to the PMEI family. The protein in the C-terminal section; belongs to the pectinesterase family.

The protein resides in the secreted. It is found in the cell wall. It catalyses the reaction [(1-&gt;4)-alpha-D-galacturonosyl methyl ester](n) + n H2O = [(1-&gt;4)-alpha-D-galacturonosyl](n) + n methanol + n H(+). Its pathway is glycan metabolism; pectin degradation; 2-dehydro-3-deoxy-D-gluconate from pectin: step 1/5. Its function is as follows. Acts in the modification of cell walls via demethylesterification of cell wall pectin. This chain is Putative pectinesterase/pectinesterase inhibitor 22 (PME22), found in Arabidopsis thaliana (Mouse-ear cress).